A 343-amino-acid chain; its full sequence is MSAFTPASEVLLRHSDDFEQSRILFAGDLQDDLPARLDTAASRAHTQQFHHWQVLSRQMGDNARFSLVATADDVADCDTLIYYWPKNKPEAQFQLMNLLSLLPVGTDIFVVGENRSGVRSAEQMLADYAPLNKVDSARRCGLYFGRLEKQPVFDADKFWGEYSVDGLTVKTLPGVFSRDGLDVGSQLLLSTLTPHTKGKVLDVGCGAGVLSVAFARHSPKIRLTLCDVSAPAVEASRATLAANCVEGEVFASNVFSEVKGRFDMIISNPPFHDGMQTSLDAAQTLIRGAVRHLNSGGELRIVANAFLPYPDVLDETFGFHEVIAQTGRFKVYRAIMTRQAKKG.

Belongs to the methyltransferase superfamily. RsmC family. Monomer.

It is found in the cytoplasm. It carries out the reaction guanosine(1207) in 16S rRNA + S-adenosyl-L-methionine = N(2)-methylguanosine(1207) in 16S rRNA + S-adenosyl-L-homocysteine + H(+). Specifically methylates the guanine in position 1207 of 16S rRNA in the 30S particle. In Escherichia coli O8 (strain IAI1), this protein is Ribosomal RNA small subunit methyltransferase C.